An 84-amino-acid chain; its full sequence is Envelope glycoprotein N (84 aa).

The signal sequence occupies residues Met1–Ala26. At Thr27–Leu45 the chain is on the virion surface side. The chain crosses the membrane as a helical span at residues Asn46 to Ile66. Over Phe67 to Tyr84 the chain is Intravirion.

The protein belongs to the herpesviridae glycoprotein N family. Interacts (via N-terminus) with gM (via N-terminus). The gM-gN heterodimer forms the gCII complex.

It is found in the virion membrane. It localises to the host membrane. Its subcellular location is the host Golgi apparatus. The protein localises to the host trans-Golgi network. Envelope glycoprotein necessary for proper maturation of gM and modulation of its membrane fusion activity. Also plays a critical role in virion morphogenesis. The protein is Envelope glycoprotein N of Human herpesvirus 6B (strain Z29) (HHV-6 variant B).